We begin with the raw amino-acid sequence, 244 residues long: Probable transcriptional regulatory protein CBU_1566 (244 aa).

The protein belongs to the TACO1 family.

It is found in the cytoplasm. The chain is Probable transcriptional regulatory protein CBU_1566 from Coxiella burnetii (strain RSA 493 / Nine Mile phase I).